The primary structure comprises 479 residues: Octopamine receptor (479 aa).

The Extracellular segment spans residues 1 to 57 (MGQAATHDANNYTSINYTEIYDVIEDEKDVCAVADEPNIPCSFGISLAVPEWEAICT). Residues asparagine 11 and asparagine 16 are each glycosylated (N-linked (GlcNAc...) asparagine). Residues 58–80 (AIILTMIIISTVVGNILVILSVF) form a helical membrane-spanning segment. The Cytoplasmic segment spans residues 81 to 90 (TYKPLRIVQN). The helical transmembrane segment at 91 to 112 (FFIVSLAVADLTVAILVLPLNV) threads the bilayer. At 113 to 129 (AYSILGQWVFGIYVCKM) the chain is on the extracellular side. The chain crosses the membrane as a helical span at residues 130 to 150 (WLTCDIMCCTSSILNLCAIAL). At 151–170 (DRYWAITDPINYAQKRTLER) the chain is on the cytoplasmic side. The chain crosses the membrane as a helical span at residues 171–193 (VLFMIGIVWILSLVISSPPLLGW). Residues 194–218 (NDWPEVFEPDTPCRLTSQPGFVIFS) are Extracellular-facing. Residues 219–240 (SSGSFYIPLVIMTVVYFEIYLA) form a helical membrane-spanning segment. At 241 to 407 (TKKRLRDRAK…LTRERRAART (167 aa)) the chain is on the cytoplasmic side. Positions 260-319 (GRNKYETKESDPNDQDSVSSDANPNEHQGGTRLVAENEKKHRTRKLTPKKKPKRRYWSKD) are disordered. Residues 274 to 287 (QDSVSSDANPNEHQ) show a composition bias toward polar residues. The span at 299–315 (KHRTRKLTPKKKPKRRY) shows a compositional bias: basic residues. A helical membrane pass occupies residues 408–429 (LGIIMGVFVVCWLPFFVIYLVI). The Extracellular portion of the chain corresponds to 430–441 (PFCVSCCLSNKF). Residues 442 to 462 (INFITWLGYVNSALNPLIYTI) traverse the membrane as a helical segment. Over 463 to 479 (FNMDFRRAFKKLLFIKC) the chain is Cytoplasmic.

The protein belongs to the G-protein coupled receptor 1 family.

The protein resides in the cell membrane. Functionally, receptor for octopamine. Octopamine (OA) is a neurotransmitter, neurohormone, and neuromodulator in invertebrates. The activity of this receptor is mediated by G proteins which activate adenylyl cyclase. In Bombyx mori (Silk moth), this protein is Octopamine receptor.